Consider the following 300-residue polypeptide: Transcription initiation factor IIB (300 aa).

A TFIIB-type zinc finger spans residues 3–34 (KQRVCPVCGSTEFIYDPERGEIVCARCGYVIE). Zn(2+)-binding residues include cysteine 7, cysteine 10, cysteine 26, and cysteine 29. A run of 2 repeats spans residues 114–197 (SELD…ARNL) and 210–291 (DYVN…ELVE).

This sequence belongs to the TFIIB family.

Its function is as follows. Stabilizes TBP binding to an archaeal box-A promoter. Also responsible for recruiting RNA polymerase II to the pre-initiation complex (DNA-TBP-TFIIB). This chain is Transcription initiation factor IIB, found in Pyrococcus abyssi (strain GE5 / Orsay).